A 155-amino-acid polypeptide reads, in one-letter code: MNYLKLTFDKLEVGEINDLVAHESCGAISLFVGTTRDNFDGKTVVLLEYEAYEAMALKTMNQICEELRARWPDIKHIGIHHRLGTVPVKEASVVIAVSSPHRKSSLEAVHFAIDELKKSVPVWKKEQYADGEGCSEWKENKECSWSKSHRDNHIL.

Substrate-binding positions include histidine 101–arginine 102, lysine 117, and lysine 124–glutamate 126.

This sequence belongs to the MoaE family. MOCS2B subfamily. In terms of assembly, heterotetramer; composed of 2 small (MOCS2A) and 2 large (MOCS2B) subunits.

The protein localises to the cytoplasm. The catalysed reaction is 2 [molybdopterin-synthase sulfur-carrier protein]-C-terminal-Gly-aminoethanethioate + cyclic pyranopterin phosphate + H2O = molybdopterin + 2 [molybdopterin-synthase sulfur-carrier protein]-C-terminal Gly-Gly + 2 H(+). It functions in the pathway cofactor biosynthesis; molybdopterin biosynthesis. In terms of biological role, catalytic subunit of the molybdopterin synthase complex, a complex that catalyzes the conversion of precursor Z into molybdopterin. Acts by mediating the incorporation of 2 sulfur atoms from thiocarboxylated MOCS2A into precursor Z to generate a dithiolene group. This chain is Molybdopterin synthase catalytic subunit 1, found in Aedes aegypti (Yellowfever mosquito).